The primary structure comprises 675 residues: NADH-ubiquinone oxidoreductase 75 kDa subunit (675 aa).

The 79-residue stretch at 2–80 folds into the 2Fe-2S ferredoxin-type domain; the sequence is KNISFKVNDF…SMNIYTNTLK (79 aa). The [2Fe-2S] cluster site is built by cysteine 36, cysteine 47, cysteine 50, and cysteine 64. The 4Fe-4S His(Cys)3-ligated-type domain occupies 80 to 119; sequence KVKKARESVLEFLLANHPLDCPICDQGGECDLQDQSVVFG. The [4Fe-4S] cluster site is built by histidine 96, cysteine 100, cysteine 103, cysteine 109, cysteine 148, cysteine 151, cysteine 154, and cysteine 198. In terms of domain architecture, 4Fe-4S Mo/W bis-MGD-type spans 217 to 273; sequence LKSYNSIDVLDSLHSNIRVDIRGTKIMRILPRVNSELNEDWITDKIRFSYDSFRRQR.

It belongs to the complex I 75 kDa subunit family. As to quaternary structure, complex I is composed of about 30 different subunits. It depends on [2Fe-2S] cluster as a cofactor. Requires [4Fe-4S] cluster as cofactor.

It localises to the mitochondrion inner membrane. It carries out the reaction a ubiquinone + NADH + 5 H(+)(in) = a ubiquinol + NAD(+) + 4 H(+)(out). Its function is as follows. Core subunit of the mitochondrial membrane respiratory chain NADH dehydrogenase (Complex I) that is believed to belong to the minimal assembly required for catalysis. Complex I functions in the transfer of electrons from NADH to the respiratory chain. The immediate electron acceptor for the enzyme is believed to be ubiquinone. This is the largest subunit of complex I and it is a component of the iron-sulfur (IP) fragment of the enzyme. It may form part of the active site crevice where NADH is oxidized. The polypeptide is NADH-ubiquinone oxidoreductase 75 kDa subunit (NAD11) (Acanthamoeba castellanii (Amoeba)).